The primary structure comprises 1940 residues: Myosin-3 (1940 aa).

Residues 33-82 (DAKTYCFVVDSKEEYAKGKIKSSQDGKVTVETEDNRTLVVKPEDVYAMNP) form the Myosin N-terminal SH3-like domain. The Myosin motor domain occupies 86-779 (DRIEDMAMLT…LLGTLEEMRD (694 aa)). Lysine 130 carries the N6,N6,N6-trimethyllysine modification. 179 to 186 (GESGAGKT) lines the ATP pocket. Actin-binding stretches follow at residues 656-678 (LNKL…IPNE) and 758-772 (KFGH…GLLG). One can recognise an IQ domain in the interval 782-811 (LAKLITRTQAVCRGFLMRVEFQKMVQRRES). Residues 840–1933 (LLKSAETEKE…KTRDFTSSRM (1094 aa)) adopt a coiled-coil conformation.

The protein belongs to the TRAFAC class myosin-kinesin ATPase superfamily. Myosin family. As to quaternary structure, muscle myosin is a hexameric protein that consists of 2 heavy chain subunits (MHC), 2 alkali light chain subunits (MLC) and 2 regulatory light chain subunits (MLC-2). As to expression, expressed in fetal bone, thymus, placenta, heart, brain, and liver.

The protein resides in the cytoplasm. Its subcellular location is the myofibril. Its function is as follows. Muscle contraction. This is Myosin-3 (MYH3) from Homo sapiens (Human).